The chain runs to 97 residues: Large ribosomal subunit protein bL28 (97 aa).

The protein belongs to the bacterial ribosomal protein bL28 family.

The sequence is that of Large ribosomal subunit protein bL28 from Bartonella henselae (strain ATCC 49882 / DSM 28221 / CCUG 30454 / Houston 1) (Rochalimaea henselae).